A 309-amino-acid chain; its full sequence is MNKYDLIERLNNRFTALEAGLQALHQQLEDLPLLAARVFSLPEIEKGTEHQPIMHIPVNATVGAAARDLAIQHYQRLFIHHQGQNVSSKAALRLPGVLCFSVTESQLATCQKSIQHINQLKTELEHIITVESGLPSEQRFEFVHTHLHGLITLNTYRTITPLINPSSVRFGWANKHIIKNVTREDVLAQLNKSLNAGRAVPPFSREQWVELISQEINDVQRLPEQARLKIKRPVKVQPIARVWYQEQQKQVQHPCPMPLIAFCQLQSAAELPKLGELTDYDANQIKHKYKPDAKPLQLLVPRLHLYLEI.

The protein belongs to the Tus family.

It localises to the cytoplasm. Its function is as follows. Trans-acting protein required for termination of DNA replication. Binds to DNA replication terminator sequences (terA to terF) to prevent the passage of replication forks. The termination efficiency will be affected by the affinity of this protein for the terminator sequence. This Yersinia enterocolitica serotype O:8 / biotype 1B (strain NCTC 13174 / 8081) protein is DNA replication terminus site-binding protein.